The chain runs to 239 residues: Pyrroloquinoline-quinone synthase (239 aa).

This sequence belongs to the PqqC family.

It catalyses the reaction 6-(2-amino-2-carboxyethyl)-7,8-dioxo-1,2,3,4,7,8-hexahydroquinoline-2,4-dicarboxylate + 3 O2 = pyrroloquinoline quinone + 2 H2O2 + 2 H2O + H(+). It participates in cofactor biosynthesis; pyrroloquinoline quinone biosynthesis. Functionally, ring cyclization and eight-electron oxidation of 3a-(2-amino-2-carboxyethyl)-4,5-dioxo-4,5,6,7,8,9-hexahydroquinoline-7,9-dicarboxylic-acid to PQQ. The protein is Pyrroloquinoline-quinone synthase of Gluconobacter oxydans (strain 621H) (Gluconobacter suboxydans).